The following is a 189-amino-acid chain: UPF0301 protein PSEEN5058 (189 aa).

It belongs to the UPF0301 (AlgH) family.

This Pseudomonas entomophila (strain L48) protein is UPF0301 protein PSEEN5058.